A 393-amino-acid chain; its full sequence is MAMLLKNKDQMIVSMGPHHPSMHGVLRLIVTLDGENVADCEPVLGYLHRGMEKIAENRTIIQYLPYVTRWDYLATMFTEAITVNAPEKLANIRIPKRASYIRVIMLELSRIASHLLWLGPFMADIGAQTPFFYILREREMIYDLFEAATGMRMMHNYFRIGGVAVDLPYGWIDKCLDFCDYFSPKISEYEKLIVHNPIFLERVKGVGFISREEAINWGLSGPMLRASGVQWDLRKVDHYECYDEVDWQIQWQKEGDSLARYLVRIGEMRESVKILQQALRIIPGGPYENLEARRLHQSQNLEWNDFDYQFMGKKSSPTFKLLKQEHYVRIEAPKGELGIFLIGNDSVFPWRWKIRPPGFINLQILPQLVRGMKLADIMPILGSIDIIMGEIDR.

This sequence belongs to the complex I 49 kDa subunit family. As to quaternary structure, NDH is composed of at least 16 different subunits, 5 of which are encoded in the nucleus.

Its subcellular location is the plastid. It localises to the chloroplast thylakoid membrane. It catalyses the reaction a plastoquinone + NADH + (n+1) H(+)(in) = a plastoquinol + NAD(+) + n H(+)(out). It carries out the reaction a plastoquinone + NADPH + (n+1) H(+)(in) = a plastoquinol + NADP(+) + n H(+)(out). In terms of biological role, NDH shuttles electrons from NAD(P)H:plastoquinone, via FMN and iron-sulfur (Fe-S) centers, to quinones in the photosynthetic chain and possibly in a chloroplast respiratory chain. The immediate electron acceptor for the enzyme in this species is believed to be plastoquinone. Couples the redox reaction to proton translocation, and thus conserves the redox energy in a proton gradient. The chain is NAD(P)H-quinone oxidoreductase subunit H, chloroplastic from Psilotum nudum (Whisk fern).